Consider the following 327-residue polypeptide: Metapyrocatechase (327 aa).

2 consecutive VOC domains span residues 14–126 (QLAH…IFFE) and 156–276 (RLDH…LFGD). Histidine 159, histidine 221, and glutamate 272 together coordinate Fe cation.

The protein belongs to the extradiol ring-cleavage dioxygenase family. It depends on Fe(2+) as a cofactor.

The catalysed reaction is catechol + O2 = (2Z,4E)-2-hydroxy-6-oxohexa-2,4-dienoate + H(+). This is Metapyrocatechase (pheB) from Geobacillus stearothermophilus (Bacillus stearothermophilus).